We begin with the raw amino-acid sequence, 297 residues long: Trimeric intracellular cation channel type A (297 aa).

Residues 1–18 (MDLISSLSLGELALSFSR) lie on the Lumenal side of the membrane. A helical transmembrane segment spans residues 19 to 39 (VPLFPVFDLSYFIVSIIYLKY). At 40–51 (EPGSVELSRRHP) the chain is on the cytoplasmic side. A helical transmembrane segment spans residues 52-72 (VASWLCAMLHCFGSYILADLL). The Lumenal segment spans residues 73-85 (LGEPIIDYFSNSS). Gly74 serves as a coordination point for Ca(2+). A helical membrane pass occupies residues 86 to 106 (SILLASGVWYLIFFCPLDLFY). Residues 107-143 (KCVCFLPVKLIFVAMKEVVRVRKIAVGIHHAHHYHHG) are Cytoplasmic-facing. The a 1,2-diacyl-sn-glycero-3-phospho-(1D-myo-inositol-4,5-bisphosphate) site is built by Lys122 and Arg126. A helical membrane pass occupies residues 144–164 (WFIMIATGWVKGSGVALLSNL). The Lumenal segment spans residues 165–177 (EQLLRGVWKPETN). A helical membrane pass occupies residues 178–198 (EILHMSFPTKASLYGAILFTL). The Cytoplasmic segment spans residues 199 to 208 (QQTRWLPVSK). A helical membrane pass occupies residues 209–229 (ASLIFVFTMFMVSCKVFLTAT). Over 230–233 (HSHS) the chain is Lumenal. The chain crosses the membrane as a helical span at residues 234–254 (SPFDVLEGYICPVLFGATWGG). Topologically, residues 255 to 297 (DHHHDNHGAPHGMGLGTQHSGLPAKAKEELSEGFRKKKTKKAD) are cytoplasmic. Residues 259 to 297 (DNHGAPHGMGLGTQHSGLPAKAKEELSEGFRKKKTKKAD) form a disordered region. The segment covering 279-288 (KAKEELSEGF) has biased composition (basic and acidic residues).

It belongs to the TMEM38 family. As to quaternary structure, homotrimer; conformation seems to be controled by binding to diacylglycerol (DAG).

It localises to the sarcoplasmic reticulum membrane. The protein resides in the nucleus membrane. The enzyme catalyses K(+)(in) = K(+)(out). With respect to regulation, channel activity is activated by a change of voltage within the sarcoplasmic reticulum lumen and blocked by luminal high Ca(2+) levels. Its function is as follows. Intracellular monovalent cation channel required for maintenance of rapid intracellular calcium release. Acts as a potassium counter-ion channel that functions in synchronization with calcium release from intracellular stores. Opened by a change of voltage within the sarcoplasmic reticulum lumen. The polypeptide is Trimeric intracellular cation channel type A (Rattus norvegicus (Rat)).